Consider the following 166-residue polypeptide: Nucleotide-binding protein Dred_1927 (166 aa).

It belongs to the YajQ family.

Nucleotide-binding protein. The sequence is that of Nucleotide-binding protein Dred_1927 from Desulforamulus reducens (strain ATCC BAA-1160 / DSM 100696 / MI-1) (Desulfotomaculum reducens).